The following is a 424-amino-acid chain: MSDHGDVSLPPEDRVRALSQLGSAVEVNEDIPPRRYFRSGVEIIRMASIYSEEGNIEHAFILYNKYITLFIEKLPKHRDYKSAVIPEKKDTVKKLKEIAFPKAEELKAELLKRYTKEYTEYNEEKKKEAEELARNMAIQQELEKEKQRVAQQKQQQLEQEQFHAFEEMIRNQELEKERLKIVQEFGKVDPGLGGPLVPDLEKPSLDVFPTLTVSSIQPSDCHTTVRPAKPPVVDRSLKPGALSNSESIPTIDGLRHVVVPGRLCPQFLQLASANTARGVETCGILCGKLMRNEFTITHVLIPKQSAGSDYCNTENEEELFLIQDQQGLITLGWIHTHPTQTAFLSSVDLHTHCSYQMMLPESVAIVCSPKFQETGFFKLTDHGLEEISSCRQKGFHPHSKDPPLFCSCSHVTVVDRAVTITDLR.

Residues 1–127 (MSDHGDVSLP…YTEYNEEKKK (127 aa)) form an interaction with CHMP3 region. 2 positions are modified to phosphoserine: Ser-2 and Ser-48. The segment at 227-231 (PAKPP) is interaction with STAM. Ser-243, Ser-245, and Ser-247 each carry phosphoserine. The 132-residue stretch at 257-388 (VVVPGRLCPQ…LTDHGLEEIS (132 aa)) folds into the MPN domain. 7 residues coordinate Zn(2+): His-335, His-337, Asp-348, His-350, Cys-390, His-396, and His-398. Residues 335–348 (HTHPTQTAFLSSVD) carry the JAMM motif motif.

It belongs to the peptidase M67C family. Interacts with STAM. Interacts with SMAD6 and SMAD7. Interacts with CHMP3; the interaction appears to relieve the autoinhibition of CHMP3. Interacts with SMURF2 and RNF11; this interaction promotes ubiquitination. It depends on Zn(2+) as a cofactor. Post-translationally, phosphorylated after BMP type I receptor activation. In terms of processing, ubiquitinated by SMURF2 in the presence of RNF11. As to expression, ubiquitously expressed.

It is found in the nucleus. It localises to the membrane. The protein resides in the cytoplasm. Its subcellular location is the early endosome. Inhibited by N-ethylmaleimide. Strongly and specifically inhibited by ubiquitin variants UbV(SP.2) and UbV(SP.3). Also inhibited by UbV(SP.1); an ubiquitin variant that also inhibits STAMBPL1. In terms of biological role, zinc metalloprotease that specifically cleaves 'Lys-63'-linked polyubiquitin chains. Does not cleave 'Lys-48'-linked polyubiquitin chains. Plays a role in signal transduction for cell growth and MYC induction mediated by IL-2 and GM-CSF. Potentiates BMP (bone morphogenetic protein) signaling by antagonizing the inhibitory action of SMAD6 and SMAD7. Has a key role in regulation of cell surface receptor-mediated endocytosis and ubiquitin-dependent sorting of receptors to lysosomes. Endosomal localization of STAMBP is required for efficient EGFR degradation but not for its internalization. Involved in the negative regulation of PI3K-AKT-mTOR and RAS-MAP signaling pathways. In Homo sapiens (Human), this protein is STAM-binding protein (STAMBP).